A 561-amino-acid chain; its full sequence is Liver carboxylesterase 1F (561 aa).

The signal sequence occupies residues Met1–Gly18. Asn79 is a glycosylation site (N-linked (GlcNAc...) asparagine). A disulfide bridge links Cys87 with Cys116. Ser221 functions as the Acyl-ester intermediate in the catalytic mechanism. Cysteines 273 and 284 form a disulfide. Catalysis depends on charge relay system residues Glu353 and His466. Positions His558–Leu561 match the Prevents secretion from ER motif.

It belongs to the type-B carboxylesterase/lipase family. Expressed in liver and kidney.

Its subcellular location is the lipid droplet. The protein resides in the cytoplasm. It localises to the cytosol. It is found in the endoplasmic reticulum. The protein localises to the microsome. It carries out the reaction a carboxylic ester + H2O = an alcohol + a carboxylate + H(+). It catalyses the reaction all-trans-retinyl hexadecanoate + H2O = all-trans-retinol + hexadecanoate + H(+). In terms of biological role, involved in the detoxification of xenobiotics and in the activation of ester and amide prodrugs. Hydrolyzes retinyl esters. Hydrolyzes p-nitrophenyl butyrate (PNPB), triacylglycerol and monoacylglycerol. Shows higher activity against PNPB, a short-chain fatty acid ester, than against triolein, a long-chain fatty acid ester. Shows no detectable activity against diacylglycerol, cholesterol ester or phospholipids. May play a role in adipocyte lipolysis. The sequence is that of Liver carboxylesterase 1F from Rattus norvegicus (Rat).